Here is a 223-residue protein sequence, read N- to C-terminus: Endonuclease V (223 aa).

Mg(2+) contacts are provided by Asp35 and Asp103.

This sequence belongs to the endonuclease V family. It depends on Mg(2+) as a cofactor.

The protein localises to the cytoplasm. It carries out the reaction Endonucleolytic cleavage at apurinic or apyrimidinic sites to products with a 5'-phosphate.. Its function is as follows. DNA repair enzyme involved in the repair of deaminated bases. Selectively cleaves double-stranded DNA at the second phosphodiester bond 3' to a deoxyinosine leaving behind the intact lesion on the nicked DNA. The polypeptide is Endonuclease V (Salmonella enteritidis PT4 (strain P125109)).